Consider the following 703-residue polypeptide: MARKTPIERYRNIGISAHIDAGKTTTTERILFYTGVNHKIGEVHDGAATMDWMEQEQERGITITSAATTAFWKGMGGNYPEHRFNIIDTPGHVDFTIEVERSMRVLDGACMVYCAVGGVQPQSETVWRQANKYGVPRLAFVNKMDRTGANFFKVYDQLKTRLKANPVPVVVPIGAEDGFQGVVDLLEMKAIVWDEASQGVKFEYQDIPAELQATADEWREKMVESAAEASEELMEKYLGGEELTRAEIVKALRDRTIACEIQPMLCGTAFKNKGVQRMLDAVIDFLPSPVDIPPVKGVDESDDEKKLERKADDNEKFSALAFKIMTDPFVGQLIFFRVYSGKINSGDTVYNPVKQKKERLGRILQMHANQREEIKEVLAGDIAAAVGLKDATTGDTLCDPAAPIVLERMVFPEPVISQAVEPKTKADQEKMGIALNRLAAEDPSFRVRTDEESGQTIISGMGELHLEILVDRMKREFGVEANIGAPQVAYRETIRKKAEDVEGKFVKQSGGRGQYGHAVITLEPQEPGKGFEFIDAIKGGVIPREYIPAVEKGIVDTLPAGILAGFPVVDVKVTLTFGSYHDVDSNENAFRMAGSMAFKEAMRKASPVLLEPMMAVEVETPEDYTGTVMGDLSSRRGIVQGMDDMVGGGKIIKAEVPLSEMFGYSTALRSATQGRATYTMEFKHYAEAPKNIAEAVMTAKGKQ.

Residues 8–290 form the tr-type G domain; that stretch reads ERYRNIGISA…AVIDFLPSPV (283 aa). Residues 17 to 24, 88 to 92, and 142 to 145 each bind GTP; these read AHIDAGKT, DTPGH, and NKMD.

The protein belongs to the TRAFAC class translation factor GTPase superfamily. Classic translation factor GTPase family. EF-G/EF-2 subfamily.

Its subcellular location is the cytoplasm. Its function is as follows. Catalyzes the GTP-dependent ribosomal translocation step during translation elongation. During this step, the ribosome changes from the pre-translocational (PRE) to the post-translocational (POST) state as the newly formed A-site-bound peptidyl-tRNA and P-site-bound deacylated tRNA move to the P and E sites, respectively. Catalyzes the coordinated movement of the two tRNA molecules, the mRNA and conformational changes in the ribosome. In Cupriavidus metallidurans (strain ATCC 43123 / DSM 2839 / NBRC 102507 / CH34) (Ralstonia metallidurans), this protein is Elongation factor G 1.